The chain runs to 312 residues: Transcription initiation factor IIB 1 (312 aa).

A TFIIB-type zinc finger spans residues Glu-12–Glu-43. Residues Cys-16, Cys-19, Cys-35, and Cys-38 each contribute to the Zn(2+) site. 2 consecutive repeat copies span residues Gln-129–Leu-212 and Asp-223–Glu-304.

It belongs to the TFIIB family.

Functionally, stabilizes TBP binding to an archaeal box-A promoter. Also responsible for recruiting RNA polymerase II to the pre-initiation complex (DNA-TBP-TFIIB). This Thermoplasma volcanium (strain ATCC 51530 / DSM 4299 / JCM 9571 / NBRC 15438 / GSS1) protein is Transcription initiation factor IIB 1.